Reading from the N-terminus, the 134-residue chain is Profilin-4 (134 aa).

Cysteines 13 and 118 form a disulfide. The short motif at 84–100 (AVIRGKKGSGGITIKKT) is the Involved in PIP2 interaction element. The residue at position 114 (Thr114) is a Phosphothreonine.

The protein belongs to the profilin family. In terms of assembly, occurs in many kinds of cells as a complex with monomeric actin in a 1:1 ratio. In terms of processing, phosphorylated by MAP kinases.

It is found in the cytoplasm. It localises to the cytoskeleton. Functionally, binds to actin and affects the structure of the cytoskeleton. At high concentrations, profilin prevents the polymerization of actin, whereas it enhances it at low concentrations. The protein is Profilin-4 of Olea europaea (Common olive).